A 77-amino-acid polypeptide reads, in one-letter code: U8-lycotoxin-Ls1o (77 aa).

A signal peptide spans M1–A20. A propeptide spanning residues Q21–K26 is cleaved from the precursor.

The protein belongs to the neurotoxin 19 (CSTX) family. 08 (U8-Lctx) subfamily. Post-translationally, contains 4 disulfide bonds. Expressed by the venom gland.

The protein localises to the secreted. This is U8-lycotoxin-Ls1o from Lycosa singoriensis (Wolf spider).